The chain runs to 100 residues: Probable antitoxin MazE1 (100 aa).

The interval 77–100 is disordered; sequence PYESEAERSAARARRNARQQRSAQ.

Forms a complex with cognate toxin MazF1.

Its function is as follows. Probable antitoxin component of a type II toxin-antitoxin (TA) system. Labile antitoxin that binds to cognate MazF1 toxin and counteracts its endoribonuclease activity. This is Probable antitoxin MazE1 (mazE1) from Mycobacterium bovis (strain ATCC BAA-935 / AF2122/97).